Consider the following 1511-residue polypeptide: ATP-dependent permease PDR12 (1511 aa).

Over residues 1 to 21 (MSSTDEHIEKDISSRSNHDDD) the composition is skewed to basic and acidic residues. The interval 1–37 (MSSTDEHIEKDISSRSNHDDDYANSVQSYAASEGQVD) is disordered. Ser-2 is modified (N-acetylserine). Topologically, residues 2-508 (SSTDEHIEKD…RGFQRVKGDS (507 aa)) are cytoplasmic. Phosphoserine is present on residues Ser-32, Ser-52, and Ser-56. Residues 144–397 (IPAHLISKFT…FQRMGWVKPN (254 aa)) form the ABC transporter 1 domain. A Glycyl lysine isopeptide (Lys-Gly) (interchain with G-Cter in ubiquitin) cross-link involves residue Lys-426. The chain crosses the membrane as a helical span at residues 509–529 (TYTKVYLSSFLIKALIIGSMF). Residues 530 to 548 (HKIDDKSQSTTAGAYSRGG) are Extracellular-facing. Residues 549–569 (MLFYVLLFASVTSLAEIGNSF) form a helical membrane-spanning segment. The Cytoplasmic portion of the chain corresponds to 570–597 (SSRPVIVKHKSYSMYHLSAESLQEIITE). A helical transmembrane segment spans residues 598-618 (FPTKFVAIVILCLITYWIPFM). At 619–622 (KYEA) the chain is on the extracellular side. Residues 623–643 (GAFFQYILYLLTVQQCTSFIF) traverse the membrane as a helical segment. At 644–657 (KFVATMSKSGVDAH) the chain is on the cytoplasmic side. Residues 658 to 678 (AVGGLWVLMLCVYAGFVLPIG) traverse the membrane as a helical segment. Residues 679 to 765 (EMHHWIRWLH…FAYKHAWRNW (87 aa)) are Extracellular-facing. The helical transmembrane segment at 766 to 786 (GVNIVWTFGYIVFNVILSEYL) threads the bilayer. The Cytoplasmic segment spans residues 787–1182 (KPVEGGGDLL…WRSPVYIRAK (396 aa)). Residues 836–1084 (IAEKDVFTWN…TLLKYFERQS (249 aa)) form the ABC transporter 2 domain. ATP-binding positions include 878-885 (GESGAGKT) and 972-979 (AEALVGKT). The chain crosses the membrane as a helical span at residues 1183–1203 (FFECVACALFVGLSYVGVNHS). Position 1204 (Val-1204) is a topological domain, extracellular. Residues 1205–1225 (GGAIEAFSSIFMLLLIALAMI) form a helical membrane-spanning segment. Residues 1226 to 1254 (NQLHVFAYDSRELYEVREAASNTFHWSVL) are Cytoplasmic-facing. Residues 1255-1275 (LLCHAAVENFWSTLCQFMCFI) form a helical membrane-spanning segment. Over 1276–1291 (CYYWPAQFSGRASHAG) the chain is Extracellular. A helical transmembrane segment spans residues 1292–1312 (FFFFFYVLIFPLYFVTYGLWI). Residues 1313 to 1318 (LYMSPD) lie on the Cytoplasmic side of the membrane. A helical membrane pass occupies residues 1319–1339 (VPSASMINSNLFAAMLLFCGI). Residues 1340-1444 (LQPREKMPAF…NVKWDHRWRN (105 aa)) lie on the Extracellular side of the membrane. Asn-1405 carries N-linked (GlcNAc...) asparagine glycosylation. The helical transmembrane segment at 1445-1465 (FGFMWAYICFNIAAMLICYYV) threads the bilayer. The Cytoplasmic segment spans residues 1466-1511 (VRVKVWSLKSVLNFKKWFNGPRKERHEKDTNIFQTVPGDENKITKK).

Belongs to the ABC transporter superfamily. ABCG family. PDR (TC 3.A.1.205) subfamily.

The protein resides in the cell membrane. In terms of biological role, plasma membrane transporter which mediates resistance to water-soluble, monocarboxylic acids with chain lengths of from C1 to C7 by active extrusion of the preservative anions from the cytosol. Also involved in the export of aromatic and branched-chain organic acids produced in amino acid catabolism. The chain is ATP-dependent permease PDR12 (PDR12) from Saccharomyces cerevisiae (strain ATCC 204508 / S288c) (Baker's yeast).